Consider the following 177-residue polypeptide: Large ribosomal subunit protein uL6 (177 aa).

This sequence belongs to the universal ribosomal protein uL6 family. As to quaternary structure, part of the 50S ribosomal subunit.

Its function is as follows. This protein binds to the 23S rRNA, and is important in its secondary structure. It is located near the subunit interface in the base of the L7/L12 stalk, and near the tRNA binding site of the peptidyltransferase center. The protein is Large ribosomal subunit protein uL6 of Rhodopseudomonas palustris (strain BisB5).